The sequence spans 136 residues: Cytidine deaminase (136 aa).

The CMP/dCMP-type deaminase domain maps to 1 to 128 (MNRQELITEA…ELLPGAFSSE (128 aa)). 42–44 (NIE) is a substrate binding site. Residue Cys53 participates in Zn(2+) binding. Glu55 serves as the catalytic Proton donor. Zn(2+) is bound by residues Cys86 and Cys89.

Belongs to the cytidine and deoxycytidylate deaminase family. As to quaternary structure, homotetramer. Zn(2+) serves as cofactor.

The catalysed reaction is cytidine + H2O + H(+) = uridine + NH4(+). The enzyme catalyses 2'-deoxycytidine + H2O + H(+) = 2'-deoxyuridine + NH4(+). This enzyme scavenges exogenous and endogenous cytidine and 2'-deoxycytidine for UMP synthesis. This is Cytidine deaminase (cdd) from Bacillus subtilis (strain 168).